The primary structure comprises 65 residues: Large ribosomal subunit protein bL35 (65 aa).

Residues Met1–Thr29 form a disordered region. Residues Ala10–Lys26 are compositionally biased toward basic residues.

Belongs to the bacterial ribosomal protein bL35 family.

In Desulfotalea psychrophila (strain LSv54 / DSM 12343), this protein is Large ribosomal subunit protein bL35.